The primary structure comprises 1953 residues: Protein BNI1 (1953 aa).

Disordered regions lie at residues 1–152 (MLKN…ASSL), 230–258 (MRAN…ANSS), 263–282 (KSVL…SNSL), and 287–306 (TLSS…SGSL). Positions 31-40 (ANSNATNSNT) are enriched in low complexity. Polar residues-rich tracts occupy residues 41 to 100 (GSPT…SQYM) and 110 to 143 (VSSQ…RQHT). Residues 174-696 (EMPSDPYEVE…NVSVASTSDE (523 aa)) form the GBD/FH3 domain. A compositionally biased stretch (low complexity) spans 232–246 (ANTTSSSTASRTSMA). The span at 263-278 (KSVLMTSASSPTSTVY) shows a compositional bias: polar residues. Residues serine 311 and serine 325 each carry the phosphoserine modification. Residues 312-337 (LNNIYRGGAENNTSASTLPGDRTNRP) are disordered. Coiled coils occupy residues 712-807 (QTDE…TILN), 864-894 (NKRL…EFEK), and 928-981 (NKLN…YKGF). Disordered regions lie at residues 990-1014 (IMDS…SLDP), 1040-1094 (HEIQ…LDAL), and 1149-1330 (TQKV…MPAS). The region spanning 1053-1337 (SSSSSDDESE…PASQIKSAVT (285 aa)) is the FH1 domain. Serine 1085 and serine 1170 each carry phosphoserine. A compositionally biased stretch (basic and acidic residues) spans 1184 to 1211 (DKAEKDMRQHVENGKQGRVVNHEEDKTA). The segment covering 1217 to 1237 (SKLNNTDGAEDLSTQSSVLSS) has biased composition (polar residues). The span at 1238-1250 (QPPPPPPPPPPVP) shows a compositional bias: pro residues. A compositionally biased stretch (basic and acidic residues) spans 1257–1270 (SLEKEKKSEDDTVK). The segment covering 1278-1292 (PAPPPPPPPPPPPPM) has biased composition (pro residues). Serine 1338 and serine 1344 each carry phosphoserine. An FH2 domain is found at 1348-1766 (FEKYPRPHKK…YIKHKKIVEE (419 aa)). Residues 1732–1811 (KFADFINEYK…DKLLEQLKNA (80 aa)) are a coiled coil. The segment covering 1768–1779 (QKRAQEKEKQKE) has biased composition (basic and acidic residues). Disordered stretches follow at residues 1768–1797 (QKRA…AEDR), 1809–1844 (KNAG…LLND), and 1872–1899 (PTPL…LEDQ). Positions 1792–1826 (DEAEDRRAVMDKLLEQLKNAGPAKSDPSSARKRAL) constitute a DAD domain. Positions 1821–1830 (ARKRALVRKK) are enriched in basic residues. A compositionally biased stretch (polar residues) spans 1880-1896 (VMNTSEDLPSPSKTSAL). Threonine 1918 carries the phosphothreonine modification.

This sequence belongs to the formin homology family. BNI1 subfamily. Homodimer, and possibly also homotetramer. Interacts with PFY1 via the FH1 domain and with actin via the FH2 domain.

Its subcellular location is the cell membrane. It is found in the cell projection. The protein resides in the ruffle membrane. It localises to the cytoplasm. The protein localises to the cytoskeleton. Required for the assembly of F-actin structures, such as actin cables and stress fibers. Nucleates actin filaments. Binds to the barbed end of the actin filament and acts as a leaky capper, slowing both polymerization and depolymerization. Protects the growing actin fiber from tight capping proteins and so increases the time of elongation and the total amount of F-actin. May organize microtubules by mediating spindle positioning and movement in the budding process. Potential target of the RHO family members. The polypeptide is Protein BNI1 (BNI1) (Saccharomyces cerevisiae (strain ATCC 204508 / S288c) (Baker's yeast)).